The primary structure comprises 155 residues: FAD synthase (155 aa).

Residues 9–10 (TF), 14–17 (HPGH), and aspartate 92 contribute to the ATP site.

Belongs to the archaeal FAD synthase family. As to quaternary structure, homodimer. A divalent metal cation serves as cofactor.

It carries out the reaction FMN + ATP + H(+) = FAD + diphosphate. It functions in the pathway cofactor biosynthesis; FAD biosynthesis; FAD from FMN: step 1/1. In terms of biological role, catalyzes the transfer of the AMP portion of ATP to flavin mononucleotide (FMN) to produce flavin adenine dinucleotide (FAD) coenzyme. This is FAD synthase from Archaeoglobus profundus (strain DSM 5631 / JCM 9629 / NBRC 100127 / Av18).